The primary structure comprises 104 residues: Transcription and mRNA export factor ENY2 (104 aa).

Positions Met-1–Gln-14 are enriched in basic and acidic residues. Positions Met-1–Gln-22 are disordered.

The protein belongs to the ENY2 family. Component of the nuclear pore complex (NPC)-associated TREX-2 complex (transcription and export complex 2). Component of the SAGA transcription coactivator-HAT complex. Within the SAGA complex, participates in a subcomplex of SAGA called the DUB module (deubiquitination module).

The protein localises to the nucleus. The protein resides in the nucleoplasm. In terms of biological role, involved in mRNA export coupled transcription activation by association with both the TREX-2 and the SAGA complexes. The transcription regulatory histone acetylation (HAT) complex SAGA is a multiprotein complex that activates transcription by remodeling chromatin and mediating histone acetylation and deubiquitination. Within the SAGA complex, participates in a subcomplex that specifically deubiquitinates histones. The SAGA complex is recruited to specific gene promoters by activators, where it is required for transcription. The TREX-2 complex functions in docking export-competent ribonucleoprotein particles (mRNPs) to the nuclear entrance of the nuclear pore complex (nuclear basket). TREX-2 participates in mRNA export and accurate chromatin positioning in the nucleus by tethering genes to the nuclear periphery. This Ciona intestinalis (Transparent sea squirt) protein is Transcription and mRNA export factor ENY2.